Here is a 453-residue protein sequence, read N- to C-terminus: Nuclear distribution protein PAC1 (453 aa).

The LisH domain maps to 19–51; that stretch reads QKDELHKSILDYFKTNNLHESFATLMREANQEG. Residues 69–96 adopt a coiled-coil conformation; it reads TSVIRLQKKIMEMESRISQLQEELSAAP. 7 WD repeats span residues 120 to 161, 162 to 201, 205 to 244, 247 to 286, 314 to 355, 356 to 395, and 413 to 452; these read GHRL…RTLK, GHTK…KNIK, GHDH…CTKT, GHAE…TKVE, LDPN…KTLT, GHDN…CTRT, and IEAP…KIWT.

Belongs to the WD repeat LIS1/nudF family. In terms of assembly, self-associates. Interacts with NDL1 and dynein.

It is found in the cytoplasm. The protein resides in the cytoskeleton. The protein localises to the spindle pole. Functionally, positively regulates the activity of the minus-end directed microtubule motor protein dynein. May enhance dynein-mediated microtubule sliding by targeting dynein to the microtubule plus end. Required for nuclear migration during vegetative growth as well as development. Required for localization of dynein to the mitotic spindle poles. Recruits additional proteins to the dynein complex at SPBs. Required for retrograde early endosome (EE) transport from the hyphal tip. In Mycosarcoma maydis (Corn smut fungus), this protein is Nuclear distribution protein PAC1.